Consider the following 231-residue polypeptide: Orotidine 5'-phosphate decarboxylase (231 aa).

Residues Asp-11, Lys-33, 60–69 (DLKFHDIPNT), Thr-120, Arg-181, Gln-190, Gly-210, and Arg-211 each bind substrate. Lys-62 (proton donor) is an active-site residue.

This sequence belongs to the OMP decarboxylase family. Type 1 subfamily. Homodimer.

It catalyses the reaction orotidine 5'-phosphate + H(+) = UMP + CO2. It participates in pyrimidine metabolism; UMP biosynthesis via de novo pathway; UMP from orotate: step 2/2. Its function is as follows. Catalyzes the decarboxylation of orotidine 5'-monophosphate (OMP) to uridine 5'-monophosphate (UMP). This Colwellia psychrerythraea (strain 34H / ATCC BAA-681) (Vibrio psychroerythus) protein is Orotidine 5'-phosphate decarboxylase.